Reading from the N-terminus, the 23-residue chain is LIGLVSKGTCVLVKTVCKKVLKQ.

Glutamine 23 carries the post-translational modification Glutamine amide.

The protein belongs to the formicidae venom precursor-01 superfamily. Ant pilosulin family. In terms of assembly, heterodimer with M-MIITX-Mp2a (pilosulin-3a) (AC Q26464); disulfide-linked. Only heterodimers (and not monomers) have been identified in the venom. Expressed by the venom gland.

It localises to the secreted. Its function is as follows. Heterodimer protein that may serve both defensive (pain-inducing) and predatory (insecticidal) roles. Has membrane-disrupting activity and shows induction of non-specific calcium influx into cells,. Shows broad-spectrum activity against a diverse range of bacteria, and cell lines, as well as hemolytic activity (EC(50)=2.18 uM). In vivo, shows moderate insecticidal activity against D.melanogaster and potent anthelmintic activity against the veterinary nematode H.contortus. In addition, intraplantar injection into mice induces nocifensive behavior and mechanical allodynia. In Myrmecia pilosula (Jack jumper ant), this protein is M-myrmeciitoxin-Mp2b.